A 137-amino-acid polypeptide reads, in one-letter code: MLSARSAQCMVSMATRSCVSRGSAGSAAAGPVEAAIRAKLEQALSPEVLELRNESGGHAVPAGSETHFRVAVVSSRFEGMSPLQRHRLVHEALSEELAGPVHALAIQAKTPAQWRENPQLDISPPCLGGSKKTRGTS.

The residue at position 81 (S81) is a Phosphoserine. Residues 115 to 137 (RENPQLDISPPCLGGSKKTRGTS) form a disordered region.

The protein belongs to the BolA/IbaG family. As to quaternary structure, interacts with GLRX5.

It localises to the mitochondrion. Functionally, acts as a mitochondrial iron-sulfur (Fe-S) cluster assembly factor that facilitates (Fe-S) cluster insertion into a subset of mitochondrial proteins. Probably acts together with the monothiol glutaredoxin GLRX5. May protect cells against oxidative stress. The chain is BolA-like protein 1 (Bola1) from Mus musculus (Mouse).